We begin with the raw amino-acid sequence, 233 residues long: ATP-dependent Clp protease proteolytic subunit 1 (233 aa).

The active-site Nucleophile is Ser116. Residue His141 is part of the active site.

Belongs to the peptidase S14 family. In terms of assembly, fourteen ClpP subunits assemble into 2 heptameric rings which stack back to back to give a disk-like structure with a central cavity, resembling the structure of eukaryotic proteasomes.

It is found in the cytoplasm. The enzyme catalyses Hydrolysis of proteins to small peptides in the presence of ATP and magnesium. alpha-casein is the usual test substrate. In the absence of ATP, only oligopeptides shorter than five residues are hydrolyzed (such as succinyl-Leu-Tyr-|-NHMec, and Leu-Tyr-Leu-|-Tyr-Trp, in which cleavage of the -Tyr-|-Leu- and -Tyr-|-Trp bonds also occurs).. Functionally, cleaves peptides in various proteins in a process that requires ATP hydrolysis. Has a chymotrypsin-like activity. Plays a major role in the degradation of misfolded proteins. This is ATP-dependent Clp protease proteolytic subunit 1 from Salinibacter ruber (strain DSM 13855 / M31).